A 458-amino-acid chain; its full sequence is tRNA modification GTPase MnmE (458 aa).

Residues Arg22, Glu84, and Arg123 each coordinate (6S)-5-formyl-5,6,7,8-tetrahydrofolate. The TrmE-type G domain occupies 220–379; the sequence is GIATAIIGRP…LEKAIADLFF (160 aa). A K(+)-binding site is contributed by Asn230. Residues 230–235, 249–255, and 274–277 contribute to the GTP site; these read NVGKSS, TDIAGTT, and DTAG. Mg(2+) is bound at residue Ser234. Residues Thr249, Ile251, and Thr254 each coordinate K(+). Thr255 serves as a coordination point for Mg(2+). Lys458 serves as a coordination point for (6S)-5-formyl-5,6,7,8-tetrahydrofolate.

It belongs to the TRAFAC class TrmE-Era-EngA-EngB-Septin-like GTPase superfamily. TrmE GTPase family. In terms of assembly, homodimer. Heterotetramer of two MnmE and two MnmG subunits. It depends on K(+) as a cofactor.

It localises to the cytoplasm. Functionally, exhibits a very high intrinsic GTPase hydrolysis rate. Involved in the addition of a carboxymethylaminomethyl (cmnm) group at the wobble position (U34) of certain tRNAs, forming tRNA-cmnm(5)s(2)U34. The chain is tRNA modification GTPase MnmE from Bacillus cytotoxicus (strain DSM 22905 / CIP 110041 / 391-98 / NVH 391-98).